The sequence spans 251 residues: Tritrans,polycis-undecaprenyl-diphosphate synthase (geranylgeranyl-diphosphate specific) (251 aa).

Asp29 is an active-site residue. Asp29 provides a ligand contact to Mg(2+). Substrate-binding positions include 30–33 (GNRR), Phe34, His46, and 74–76 (STE). The active-site Proton acceptor is Asn77. Substrate contacts are provided by residues Phe78, Arg80, Arg200, and 206–208 (RLS).

The protein belongs to the UPP synthase family. Homodimer. Mg(2+) is required as a cofactor.

It carries out the reaction geranylgeranyl diphosphate + 7 isopentenyl diphosphate = tri-trans,hepta-cis-undecaprenyl diphosphate + 7 diphosphate. Functionally, catalyzes the sequential condensation of isopentenyl diphosphate (IPP) with geranylgeranyl diphosphate (GGPP) to yield (2Z,6Z,10Z,14Z,18Z,22Z,26Z,30E,34E,38E)-undecaprenyl diphosphate (tritrans,heptacis-UPP). It is probably the precursor of glycosyl carrier lipids. The sequence is that of Tritrans,polycis-undecaprenyl-diphosphate synthase (geranylgeranyl-diphosphate specific) from Archaeoglobus fulgidus (strain ATCC 49558 / DSM 4304 / JCM 9628 / NBRC 100126 / VC-16).